A 230-amino-acid chain; its full sequence is MKAFDLHRMAFDKVPFDFLGEVALRSLYTFVLVFLFLKMTGRRGVRQMSLFEVLIILTLGSAAGDVAFYDDVPMVPVLIVFITLALLYRLVMWLMAHSEKLEDLLEGKPVVIIEDGELAWSKLNNSNMTEFEFFMELRLRGVEQLGQVRLAILETNGQISVYFFEDDKVKPGLLILPSDCTQRYKVVPESADYACIRCSEIIHMKAGEKQLCPRCANPEWTKASRAKRVT.

A run of 3 helical transmembrane segments spans residues 16 to 36, 48 to 68, and 75 to 95; these read FDFL…VFLF, MSLF…DVAF, and VPVL…MWLM.

The protein belongs to the UPF0702 family.

It is found in the cell membrane. The chain is UPF0702 transmembrane protein YcaP (ycaP) from Escherichia coli (strain K12).